A 67-amino-acid chain; its full sequence is DNA-directed RNA polymerase subunit omega (67 aa).

The protein belongs to the RNA polymerase subunit omega family. In terms of assembly, the RNAP catalytic core consists of 2 alpha, 1 beta, 1 beta' and 1 omega subunit. When a sigma factor is associated with the core the holoenzyme is formed, which can initiate transcription.

It carries out the reaction RNA(n) + a ribonucleoside 5'-triphosphate = RNA(n+1) + diphosphate. Its function is as follows. Promotes RNA polymerase assembly. Latches the N- and C-terminal regions of the beta' subunit thereby facilitating its interaction with the beta and alpha subunits. The sequence is that of DNA-directed RNA polymerase subunit omega from Polaromonas naphthalenivorans (strain CJ2).